We begin with the raw amino-acid sequence, 544 residues long: Chaperonin GroEL 1 (544 aa).

ATP is bound by residues T30–P33, K51, D87–T91, G415, D481–L483, and D497.

This sequence belongs to the chaperonin (HSP60) family. As to quaternary structure, forms a cylinder of 14 subunits composed of two heptameric rings stacked back-to-back. Interacts with the co-chaperonin GroES.

It is found in the cytoplasm. It catalyses the reaction ATP + H2O + a folded polypeptide = ADP + phosphate + an unfolded polypeptide.. In terms of biological role, together with its co-chaperonin GroES, plays an essential role in assisting protein folding. The GroEL-GroES system forms a nano-cage that allows encapsulation of the non-native substrate proteins and provides a physical environment optimized to promote and accelerate protein folding. This is Chaperonin GroEL 1 from Chlamydia pneumoniae (Chlamydophila pneumoniae).